Reading from the N-terminus, the 612-residue chain is Probable serine/threonine-protein kinase WNK4 (612 aa).

In terms of domain architecture, Protein kinase spans 25 to 282 (IRYNEVLGRG…AKELLQDPFL (258 aa)). ATP contacts are provided by residues 105–108 (TELF) and Lys155. Asp172 acts as the Proton acceptor in catalysis.

The protein belongs to the protein kinase superfamily. Ser/Thr protein kinase family. WNK subfamily.

The catalysed reaction is L-seryl-[protein] + ATP = O-phospho-L-seryl-[protein] + ADP + H(+). It catalyses the reaction L-threonyl-[protein] + ATP = O-phospho-L-threonyl-[protein] + ADP + H(+). The chain is Probable serine/threonine-protein kinase WNK4 (WNK4) from Oryza sativa subsp. japonica (Rice).